Here is a 176-residue protein sequence, read N- to C-terminus: DNA-directed RNA polymerase II subunit 7 (176 aa).

Belongs to the eukaryotic RPB7/RPC8 RNA polymerase subunit family. As to quaternary structure, component of the RNA polymerase II complex consisting of at least 12 subunits. Interacts with NRPB4.

It localises to the nucleus. Its function is as follows. DNA-dependent RNA polymerase catalyzes the transcription of DNA into RNA using the four ribonucleoside triphosphates as substrates. Component of RNA polymerase II which synthesizes mRNA precursors and many functional non-coding RNAs. Pol II is the central component of the basal RNA polymerase II transcription machinery. It is composed of mobile elements that move relative to each other. NRPB7 is part of a subcomplex with NRPB4 that binds to a pocket formed by NRPB1, NRPB2 and NRPB6 at the base of the clamp element. The NRBP4-NRPB7 subcomplex seems to lock the clamp via NRPB7 in the closed conformation thus preventing double-stranded DNA to enter the active site cleft. The NRPB4-NRPB7 subcomplex binds single-stranded DNA and RNA. In Arabidopsis thaliana (Mouse-ear cress), this protein is DNA-directed RNA polymerase II subunit 7 (NRPB7).